A 757-amino-acid polypeptide reads, in one-letter code: Polyribonucleotide nucleotidyltransferase (757 aa).

Positions 487 and 493 each coordinate Mg(2+). The KH domain occupies 554–613 (PRITTVRVKPDQIRLIIGPGGKTIKGIVDQTGVAIDVEDDGTVNVASADSDAVKRALDII). Residues 623–691 (GATYKGTVKR…REGKIRLSRR (69 aa)) enclose the S1 motif domain. A disordered region spans residues 697 to 757 (PEGEEGDRAR…PPRERRERRS (61 aa)). 2 stretches are compositionally biased toward basic and acidic residues: residues 702 to 711 (GDRARERMAQ) and 719 to 757 (PRRDGPGGRGGDRGGDRGSRPGLDRDRGGPPRERRERRS).

Belongs to the polyribonucleotide nucleotidyltransferase family. Mg(2+) serves as cofactor.

The protein resides in the cytoplasm. It carries out the reaction RNA(n+1) + phosphate = RNA(n) + a ribonucleoside 5'-diphosphate. Involved in mRNA degradation. Catalyzes the phosphorolysis of single-stranded polyribonucleotides processively in the 3'- to 5'-direction. This chain is Polyribonucleotide nucleotidyltransferase, found in Sorangium cellulosum (strain So ce56) (Polyangium cellulosum (strain So ce56)).